The following is a 428-amino-acid chain: Histidinol dehydrogenase (428 aa).

Tyr-126, Gln-188, and Asn-211 together coordinate NAD(+). Residues Ser-234, Gln-256, and His-259 each coordinate substrate. Residues Gln-256 and His-259 each contribute to the Zn(2+) site. Residues Glu-324 and His-325 each act as proton acceptor in the active site. Residues His-325, Asp-358, Glu-412, and His-417 each coordinate substrate. Residue Asp-358 participates in Zn(2+) binding. His-417 serves as a coordination point for Zn(2+).

Belongs to the histidinol dehydrogenase family. The cofactor is Zn(2+).

It catalyses the reaction L-histidinol + 2 NAD(+) + H2O = L-histidine + 2 NADH + 3 H(+). It participates in amino-acid biosynthesis; L-histidine biosynthesis; L-histidine from 5-phospho-alpha-D-ribose 1-diphosphate: step 9/9. Catalyzes the sequential NAD-dependent oxidations of L-histidinol to L-histidinaldehyde and then to L-histidine. The protein is Histidinol dehydrogenase of Chlorobaculum tepidum (strain ATCC 49652 / DSM 12025 / NBRC 103806 / TLS) (Chlorobium tepidum).